A 525-amino-acid polypeptide reads, in one-letter code: Bifunctional purine biosynthesis protein PurH (525 aa).

The MGS-like domain maps to 1–149 (MSDPVIKRAL…KNNESVTVVT (149 aa)).

Belongs to the PurH family.

The catalysed reaction is (6R)-10-formyltetrahydrofolate + 5-amino-1-(5-phospho-beta-D-ribosyl)imidazole-4-carboxamide = 5-formamido-1-(5-phospho-D-ribosyl)imidazole-4-carboxamide + (6S)-5,6,7,8-tetrahydrofolate. The enzyme catalyses IMP + H2O = 5-formamido-1-(5-phospho-D-ribosyl)imidazole-4-carboxamide. It participates in purine metabolism; IMP biosynthesis via de novo pathway; 5-formamido-1-(5-phospho-D-ribosyl)imidazole-4-carboxamide from 5-amino-1-(5-phospho-D-ribosyl)imidazole-4-carboxamide (10-formyl THF route): step 1/1. Its pathway is purine metabolism; IMP biosynthesis via de novo pathway; IMP from 5-formamido-1-(5-phospho-D-ribosyl)imidazole-4-carboxamide: step 1/1. The protein is Bifunctional purine biosynthesis protein PurH of Prosthecochloris aestuarii (strain DSM 271 / SK 413).